A 1493-amino-acid polypeptide reads, in one-letter code: Myosin-13 (1493 aa).

In terms of domain architecture, Myosin N-terminal SH3-like spans 18-67 (KVGSIVWVQDPEEAWIDGEVVEVNGEDIKVQCTSGKTVVAKGSNTYPKDM). The region spanning 72-741 (SGVDDMTTLA…QMAELDDRRT (670 aa)) is the Myosin motor domain. ATP-binding positions include 166–173 (GESGAGKT) and 219–227 (NNNSSRFGK). Actin-binding regions lie at residues 504-538 (LIEK…YETL), 540-563 (DNKY…AGDV), 598-622 (FPPL…KQQL), and 622-644 (LASL…KPNN). IQ domains lie at 744–773 (LGRA…AAIN), 767–796 (LRNA…EAAA), 792–821 (REAA…VTVQ), 813–842 (YIEA…ATTV), 836–865 (KTKA…AAIT), and 859–888 (LKKA…DARD). Positions 889–1057 (TVVLQAAKSM…NFLKESVLTT (169 aa)) form a coiled coil. Positions 1085–1114 (QLSGAEFTTPPRIQESGSDTKSRGSHIDPQ) are disordered. Positions 1102–1114 (SDTKSRGSHIDPQ) are enriched in basic and acidic residues. The Dilute domain maps to 1161-1444 (DRLVQMIGSA…IASMTGVMTD (284 aa)).

Belongs to the TRAFAC class myosin-kinesin ATPase superfamily. Myosin family. Plant myosin class XI subfamily. Homodimer.

In terms of biological role, myosin heavy chain that is required for the cell cycle-regulated transport of various organelles and proteins for their segregation. Functions by binding with its tail domain to receptor proteins on organelles and exerting force with its N-terminal motor domain against actin filaments, thereby transporting its cargo along polarized actin cables. This is Myosin-13 (XI-G) from Arabidopsis thaliana (Mouse-ear cress).